The chain runs to 128 residues: Ribonuclease P protein component (128 aa).

It belongs to the RnpA family. As to quaternary structure, consists of a catalytic RNA component (M1 or rnpB) and a protein subunit.

It carries out the reaction Endonucleolytic cleavage of RNA, removing 5'-extranucleotides from tRNA precursor.. Functionally, RNaseP catalyzes the removal of the 5'-leader sequence from pre-tRNA to produce the mature 5'-terminus. It can also cleave other RNA substrates such as 4.5S RNA. The protein component plays an auxiliary but essential role in vivo by binding to the 5'-leader sequence and broadening the substrate specificity of the ribozyme. The sequence is that of Ribonuclease P protein component from Rhizobium meliloti (strain 1021) (Ensifer meliloti).